The chain runs to 261 residues: Ribosomal RNA small subunit methyltransferase J (261 aa).

S-adenosyl-L-methionine is bound by residues 109–110 (RD), 125–126 (ER), and aspartate 179.

It belongs to the methyltransferase superfamily. RsmJ family.

The protein resides in the cytoplasm. It carries out the reaction guanosine(1516) in 16S rRNA + S-adenosyl-L-methionine = N(2)-methylguanosine(1516) in 16S rRNA + S-adenosyl-L-homocysteine + H(+). Functionally, specifically methylates the guanosine in position 1516 of 16S rRNA. This Pseudomonas paraeruginosa (strain DSM 24068 / PA7) (Pseudomonas aeruginosa (strain PA7)) protein is Ribosomal RNA small subunit methyltransferase J.